An 855-amino-acid chain; its full sequence is Pentatricopeptide repeat-containing protein At1g74750 (855 aa).

Positions 21–40 (GSRPSAADGNSCTCAEDESG) are disordered. PPR repeat units lie at residues 358-392 (DGHTYTTMVGNLGRAKQFGEINKLLDEMVRDGCKP), 393-427 (NTVTYNRLIHSYGRANYLKEAMNVFNQMQEAGCEP), 428-462 (DRVTYCTLIDIHAKAGFLDIAMDMYQRMQEAGLSP), 463-497 (DTFTYSVIINCLGKAGHLPAAHRLFCEMVGQGCTP), 498-532 (NLVTFNIMIALHAKARNYETALKLYRDMQNAGFQP), 533-567 (DKVTYSIVMEVLGHCGFLEEAEGVFAEMQRKNWVP), 568-602 (DEPVYGLLVDLWGKAGNVDKAWQWYQAMLQAGLRP), and 603-637 (NVPTCNSLLSTFLRVHRMSEAYNLLQSMLALGLHP). The region spanning 755–838 (INLHVMSEGT…NSGCFVGSGE (84 aa)) is the Smr domain.

This sequence belongs to the PPR family. P subfamily.

The polypeptide is Pentatricopeptide repeat-containing protein At1g74750 (Arabidopsis thaliana (Mouse-ear cress)).